A 378-amino-acid chain; its full sequence is Acetylornithine deacetylase (378 aa).

His-76 contributes to the Zn(2+) binding site. Residue Asp-78 is part of the active site. Asp-108 provides a ligand contact to Zn(2+). The active site involves Glu-140. Glu-141, Glu-165, and His-351 together coordinate Zn(2+).

It belongs to the peptidase M20A family. ArgE subfamily. Homodimer. It depends on Zn(2+) as a cofactor. Requires Co(2+) as cofactor. Glutathione serves as cofactor.

Its subcellular location is the cytoplasm. The enzyme catalyses N(2)-acetyl-L-ornithine + H2O = L-ornithine + acetate. Its pathway is amino-acid biosynthesis; L-arginine biosynthesis; L-ornithine from N(2)-acetyl-L-ornithine (linear): step 1/1. Functionally, catalyzes the hydrolysis of the amide bond of N(2)-acetylated L-amino acids. Cleaves the acetyl group from N-acetyl-L-ornithine to form L-ornithine, an intermediate in L-arginine biosynthesis pathway, and a branchpoint in the synthesis of polyamines. The chain is Acetylornithine deacetylase from Vibrio parahaemolyticus serotype O3:K6 (strain RIMD 2210633).